The following is an 89-amino-acid chain: Small ribosomal subunit protein uS15 (89 aa).

The segment at 1-23 is disordered; that stretch reads MALTKERTASVVQQYGSGEKDTG.

Belongs to the universal ribosomal protein uS15 family. Part of the 30S ribosomal subunit. Forms a bridge to the 50S subunit in the 70S ribosome, contacting the 23S rRNA.

One of the primary rRNA binding proteins, it binds directly to 16S rRNA where it helps nucleate assembly of the platform of the 30S subunit by binding and bridging several RNA helices of the 16S rRNA. Its function is as follows. Forms an intersubunit bridge (bridge B4) with the 23S rRNA of the 50S subunit in the ribosome. The sequence is that of Small ribosomal subunit protein uS15 from Treponema pallidum (strain Nichols).